The chain runs to 349 residues: tRNA pseudouridine synthase D (349 aa).

F27 is a binding site for substrate. The active-site Nucleophile is D80. A substrate-binding site is contributed by N129. One can recognise a TRUD domain in the interval G155–L303. F329 provides a ligand contact to substrate.

This sequence belongs to the pseudouridine synthase TruD family.

It carries out the reaction uridine(13) in tRNA = pseudouridine(13) in tRNA. Its function is as follows. Responsible for synthesis of pseudouridine from uracil-13 in transfer RNAs. The chain is tRNA pseudouridine synthase D from Salmonella typhi.